The following is a 643-amino-acid chain: Threonine--tRNA ligase (643 aa).

The 62-residue stretch at Met1–Thr62 folds into the TGS domain. The catalytic stretch occupies residues Asp239 to Pro537. Residues Cys333, His384, and His514 each contribute to the Zn(2+) site.

It belongs to the class-II aminoacyl-tRNA synthetase family. In terms of assembly, homodimer. It depends on Zn(2+) as a cofactor.

The protein resides in the cytoplasm. It catalyses the reaction tRNA(Thr) + L-threonine + ATP = L-threonyl-tRNA(Thr) + AMP + diphosphate + H(+). Its function is as follows. Catalyzes the attachment of threonine to tRNA(Thr) in a two-step reaction: L-threonine is first activated by ATP to form Thr-AMP and then transferred to the acceptor end of tRNA(Thr). Also edits incorrectly charged L-seryl-tRNA(Thr). The polypeptide is Threonine--tRNA ligase (Lactobacillus gasseri (strain ATCC 33323 / DSM 20243 / BCRC 14619 / CIP 102991 / JCM 1131 / KCTC 3163 / NCIMB 11718 / NCTC 13722 / AM63)).